Reading from the N-terminus, the 549-residue chain is Cell pattern formation-associated protein StuA (549 aa).

Positions 86–192 (RVTATLWEDE…HNIGALLYHP (107 aa)) constitute an HTH APSES-type domain. The H-T-H motif DNA-binding region spans 120–141 (GTKLLNVAGMTRGRRDGILKSE). Disordered regions lie at residues 205–227 (AERR…LPSI), 246–288 (SLAN…DLHR), 332–466 (REED…DHLN), and 514–549 (ASTV…QSFG). The span at 246 to 266 (SLANGPQSLASTPQPLANGSQ) shows a compositional bias: polar residues. 3 stretches are compositionally biased toward basic and acidic residues: residues 278–288 (RGREEEEDLHR), 332–346 (REED…HNAH), and 385–395 (RGRDEDDDHRS). Positions 516-545 (TVAASPSYPSAPVYDTAARPPSAISAPRRQ) are nuclear localization domain. Low complexity predominate over residues 532-549 (AARPPSAISAPRRQQSFG).

It belongs to the EFG1/PHD1/stuA family.

Its subcellular location is the nucleus. In terms of biological role, transcription factor that regulates asexual reproduction. Binds the StuA-response elements (StRE) with the consensus sequence 5'-(A/T)CGCG(T/A)N(A/C)-3' at the promoters of target genes. This is Cell pattern formation-associated protein StuA from Gibberella moniliformis (strain M3125 / FGSC 7600) (Maize ear and stalk rot fungus).